The sequence spans 75 residues: Salivary glue protein Sgs-8 (75 aa).

A signal peptide spans 1-24 (MKLLVVAVIACIMLIGFADPASGC).

The chain is Salivary glue protein Sgs-8 (Sgs8) from Drosophila melanogaster (Fruit fly).